The sequence spans 272 residues: Large ribosomal subunit protein uL2 (272 aa).

Positions 247-272 (PWGQPCKGFKTRNNKRTNSSIIKRRK) are disordered. Positions 262 to 272 (RTNSSIIKRRK) are enriched in polar residues.

Belongs to the universal ribosomal protein uL2 family. As to quaternary structure, part of the 50S ribosomal subunit. Forms a bridge to the 30S subunit in the 70S ribosome.

Functionally, one of the primary rRNA binding proteins. Required for association of the 30S and 50S subunits to form the 70S ribosome, for tRNA binding and peptide bond formation. It has been suggested to have peptidyltransferase activity; this is somewhat controversial. Makes several contacts with the 16S rRNA in the 70S ribosome. This chain is Large ribosomal subunit protein uL2, found in Bdellovibrio bacteriovorus (strain ATCC 15356 / DSM 50701 / NCIMB 9529 / HD100).